Consider the following 320-residue polypeptide: Peroxidase 66 (320 aa).

The first 29 residues, 1-29 (MAASVSASCLNRLSSLAVVLVALASAASA), serve as a signal peptide directing secretion. A Pyrrolidone carboxylic acid modification is found at glutamine 30. Cystine bridges form between cysteine 40/cysteine 118, cysteine 73/cysteine 78, cysteine 124/cysteine 315, and cysteine 202/cysteine 227. Residue histidine 71 is the Proton acceptor of the active site. The Ca(2+) site is built by aspartate 72, valine 75, glycine 77, aspartate 79, and serine 81. 2 N-linked (GlcNAc...) asparagine glycosylation sites follow: asparagine 85 and asparagine 96. Proline 165 contacts substrate. Histidine 195 lines the heme b pocket. Residue threonine 196 participates in Ca(2+) binding. A glycan (N-linked (GlcNAc...) asparagine) is linked at asparagine 211. Ca(2+) is bound by residues aspartate 239, threonine 242, and aspartate 247.

It belongs to the peroxidase family. Classical plant (class III) peroxidase subfamily. Heme b is required as a cofactor. Requires Ca(2+) as cofactor.

It is found in the secreted. The catalysed reaction is 2 a phenolic donor + H2O2 = 2 a phenolic radical donor + 2 H2O. In terms of biological role, removal of H(2)O(2), oxidation of toxic reductants, biosynthesis and degradation of lignin, suberization, auxin catabolism, response to environmental stresses such as wounding, pathogen attack and oxidative stress. These functions might be dependent on each isozyme/isoform in each plant tissue. The chain is Peroxidase 66 (PER66) from Zea mays (Maize).